Consider the following 111-residue polypeptide: uncharacterized protein (111 aa).

The helical transmembrane segment at 48–70 (LFLVPFPASFTRWLTFLFHLVIY) threads the bilayer.

The protein resides in the membrane. This is an uncharacterized protein from Saccharomyces cerevisiae (strain ATCC 204508 / S288c) (Baker's yeast).